The primary structure comprises 75 residues: Small ribosomal subunit protein bS18 (75 aa).

Belongs to the bacterial ribosomal protein bS18 family. Part of the 30S ribosomal subunit. Forms a tight heterodimer with protein bS6.

In terms of biological role, binds as a heterodimer with protein bS6 to the central domain of the 16S rRNA, where it helps stabilize the platform of the 30S subunit. This is Small ribosomal subunit protein bS18 from Buchnera aphidicola subsp. Baizongia pistaciae (strain Bp).